Reading from the N-terminus, the 180-residue chain is Tubulin polymerization-promoting protein homolog (180 aa).

Basic and acidic residues-rich tracts occupy residues 136 to 158 (TGAH…RADT) and 169 to 180 (KNKDSYDKTHGK). The tract at residues 136–180 (TGAHKERFDAEGKGKGKSGRADTTENTGYVGAYKNKDSYDKTHGK) is disordered.

This sequence belongs to the TPPP family.

Regulator of microtubule dynamics. In Caenorhabditis elegans, this protein is Tubulin polymerization-promoting protein homolog.